An 810-amino-acid chain; its full sequence is MPMDLILVVWFCVCTARTVVGFGMDPDLQMDIVTELDLVNTTLGVAQVSGMHNASKAFLFQDIEREIHAAPHVSEKLIQLFRNKSEFTILATVQQKPSTSGVILSIRELEHSYFELESSGLRDEIRYHYIHNGKPRTEALPYRMADGQWHKVALSVSASHLLLHVDCNRIYERVIDPPDTNLPPGINLWLGQRNQKHGLFKGIIQDGKIIFMPNGYITQCPNLNHTCPTCSDFLSLVQGIMDLQELLAKMTAKLNYAETRLSQLENCHCEKTCQVSGLLYRDQDSWVDGDHCRNCTCKSGAVECRRMSCPPLNCSPDSLPVHIAGQCCKVCRPKCIYGGKVLAEGQRILTKSCRECRGGVLVKITEMCPPLNCSEKDHILPENQCCRVCRGHNFCAEGPKCGENSECKNWNTKATCECKSGYISVQGDSAYCEDIDECAAKMHYCHANTVCVNLPGLYRCDCVPGYIRVDDFSCTEHDECGSGQHNCDENAICTNTVQGHSCTCKPGYVGNGTICRAFCEEGCRYGGTCVAPNKCVCPSGFTGSHCEKDIDECSEGIIECHNHSRCVNLPGWYHCECRSGFHDDGTYSLSGESCIDIDECALRTHTCWNDSACINLAGGFDCLCPSGPSCSGDCPHEGGLKHNGQVWTLKEDRCSVCSCKDGKIFCRRTACDCQNPSADLFCCPECDTRVTSQCLDQNGHKLYRSGDNWTHSCQQCRCLEGEVDCWPLTCPNLSCEYTAILEGECCPRCVSDPCLADNITYDIRKTCLDSYGVSRLSGSVWTMAGSPCTTCKCKNGRVCCSVDFECLQNN.

Residues 1–21 (MPMDLILVVWFCVCTARTVVG) form the signal peptide. Residues Asn40, Asn53, Asn83, Asn224, Asn294, and Asn372 are each glycosylated (N-linked (GlcNAc...) asparagine). Positions 64–227 (EREIHAAPHV…TQCPNLNHTC (164 aa)) constitute a Laminin G-like domain. A VWFC 1 domain is found at 271–332 (KTCQVSGLLY…IAGQCCKVCR (62 aa)). 3 disulfide bridges follow: Cys395/Cys407, Cys401/Cys416, and Cys418/Cys432. Ca(2+)-binding residues include Asp434, Ile435, and Glu437. The EGF-like 1; calcium-binding domain occupies 434 to 475 (DIDECAAKMHYCHANTVCVNLPGLYRCDCVPGYIRVDDFSCT). 15 cysteine pairs are disulfide-bonded: Cys438–Cys451, Cys445–Cys460, Cys462–Cys474, Cys480–Cys493, Cys487–Cys502, Cys504–Cys515, Cys519–Cys529, Cys523–Cys535, Cys537–Cys546, Cys553–Cys566, Cys560–Cys575, Cys577–Cys594, Cys600–Cys613, Cys607–Cys622, and Cys624–Cys630. Positions 453, 454, and 457 each coordinate Ca(2+). One can recognise an EGF-like 2; calcium-binding domain in the interval 476–516 (EHDECGSGQHNCDENAICTNTVQGHSCTCKPGYVGNGTICR). A glycan (N-linked (GlcNAc...) asparagine) is linked at Asn511. Positions 517-547 (AFCEEGCRYGGTCVAPNKCVCPSGFTGSHCE) constitute an EGF-like 3 domain. Positions 549–587 (DIDECSEGIIECHNHSRCVNLPGWYHCECRSGFHDDGTY) constitute an EGF-like 4; calcium-binding domain. Asn562 carries an N-linked (GlcNAc...) asparagine glycan. In terms of domain architecture, EGF-like 5; calcium-binding spans 596–631 (DIDECALRTHTCWNDSACINLAGGFDCLCPSGPSCS). Asn609 carries N-linked (GlcNAc...) asparagine glycosylation. One can recognise a VWFC 2 domain in the interval 692–750 (SQCLDQNGHKLYRSGDNWTHSCQQCRCLEGEVDCWPLTCPNLSCEYTAILEGECCPRCV). N-linked (GlcNAc...) asparagine glycans are attached at residues Asn708, Asn732, and Asn758.

In terms of assembly, homotrimer. Binds to PKC beta-1. Interacts with ATRAID; the interaction promotes osteoblast cell differentiation and mineralization. Interacts with ROBO3.

Its subcellular location is the cytoplasm. The protein localises to the nucleus envelope. The protein resides in the secreted. Its function is as follows. Plays a role in the control of cell growth and differentiation. Promotes osteoblast cell differentiation and terminal mineralization. The sequence is that of Protein kinase C-binding protein NELL1 (NELL1) from Homo sapiens (Human).